We begin with the raw amino-acid sequence, 499 residues long: Glycerol kinase (499 aa).

Thr-13 is an ADP binding site. The ATP site is built by Thr-13, Thr-14, and Ser-15. Position 13 (Thr-13) interacts with sn-glycerol 3-phosphate. Residue Arg-17 participates in ADP binding. Sn-glycerol 3-phosphate is bound by residues Arg-83, Glu-84, Tyr-136, and Asp-246. Positions 83, 84, 136, 246, and 247 each coordinate glycerol. ADP-binding residues include Thr-268 and Gly-311. Thr-268, Gly-311, Gln-315, and Gly-412 together coordinate ATP. Gly-412 and Asn-416 together coordinate ADP.

This sequence belongs to the FGGY kinase family.

The enzyme catalyses glycerol + ATP = sn-glycerol 3-phosphate + ADP + H(+). Its pathway is polyol metabolism; glycerol degradation via glycerol kinase pathway; sn-glycerol 3-phosphate from glycerol: step 1/1. Inhibited by fructose 1,6-bisphosphate (FBP). Functionally, key enzyme in the regulation of glycerol uptake and metabolism. Catalyzes the phosphorylation of glycerol to yield sn-glycerol 3-phosphate. The protein is Glycerol kinase of Francisella philomiragia subsp. philomiragia (strain ATCC 25017 / CCUG 19701 / FSC 153 / O#319-036).